We begin with the raw amino-acid sequence, 957 residues long: Glycine dehydrogenase (decarboxylating) (957 aa).

N6-(pyridoxal phosphate)lysine is present on Lys708.

This sequence belongs to the GcvP family. In terms of assembly, the glycine cleavage system is composed of four proteins: P, T, L and H. It depends on pyridoxal 5'-phosphate as a cofactor.

It carries out the reaction N(6)-[(R)-lipoyl]-L-lysyl-[glycine-cleavage complex H protein] + glycine + H(+) = N(6)-[(R)-S(8)-aminomethyldihydrolipoyl]-L-lysyl-[glycine-cleavage complex H protein] + CO2. The glycine cleavage system catalyzes the degradation of glycine. The P protein binds the alpha-amino group of glycine through its pyridoxal phosphate cofactor; CO(2) is released and the remaining methylamine moiety is then transferred to the lipoamide cofactor of the H protein. This Salmonella typhi protein is Glycine dehydrogenase (decarboxylating).